Here is an 863-residue protein sequence, read N- to C-terminus: Scm-like with four MBT domains protein 1 (863 aa).

MBT repeat units follow at residues phenylalanine 20–proline 120, serine 128–proline 232, alanine 242–proline 346, and phenylalanine 354–proline 451. Residues lysine 638–proline 773 form a disordered region. The segment covering lysine 660–serine 679 has biased composition (basic residues). Over residues serine 680–proline 691 the composition is skewed to polar residues. Positions glycine 696 to leucine 710 are enriched in acidic residues. Serine 764 and serine 772 each carry phosphoserine. Residues tryptophan 793–phenylalanine 861 enclose the SAM domain.

In terms of assembly, interacts with MYOD1. Component of the SLC (SFMBT1-LSD1-CoREST) corepressor complex, which also contains KDM1A/LSD1 and RCOR1/CoREST. Interacts with KDM1A/LSD1 and RCOR1/CoREST. Interacts with MYOD1. Interacts with L3MBTL3. As to expression, highly expressed in the testis, low expression was detected in brain, kidney, heart and lung.

Its subcellular location is the nucleus. Histone-binding protein, which is part of various corepressor complexes. Mediates the recruitment of corepressor complexes to target genes, followed by chromatin compaction and repression of transcription. Plays a role during myogenesis: required for the maintenance of undifferentiated states of myogenic progenitor cells via interaction with MYOD1. Interaction with MYOD1 leads to the recruitment of associated corepressors and silencing of MYOD1 target genes. Part of the SLC complex in germ cells, where it may play a role during spermatogenesis. The protein is Scm-like with four MBT domains protein 1 (Sfmbt1) of Rattus norvegicus (Rat).